The following is a 104-amino-acid chain: Large ribosomal subunit protein eL31 (104 aa).

This sequence belongs to the eukaryotic ribosomal protein eL31 family.

The sequence is that of Large ribosomal subunit protein eL31 (rpl31e) from Aeropyrum pernix (strain ATCC 700893 / DSM 11879 / JCM 9820 / NBRC 100138 / K1).